Here is a 334-residue protein sequence, read N- to C-terminus: Ketol-acid reductoisomerase (NADP(+)) (334 aa).

The region spanning 2 to 181 is the KARI N-terminal Rossmann domain; sequence TKVYYDQSVE…GATRAGVIET (180 aa). NADP(+) is bound by residues 25–28, R48, S52, and 82–85; these read YGSQ and DEIQ. H107 is a catalytic residue. G133 is a binding site for NADP(+). A KARI C-terminal knotted domain is found at 182-327; the sequence is TFKEETETDL…RELRKMMPFI (146 aa). Mg(2+) is bound by residues D190, E194, E226, and E230. S251 contributes to the substrate binding site.

Belongs to the ketol-acid reductoisomerase family. The cofactor is Mg(2+).

The enzyme catalyses (2R)-2,3-dihydroxy-3-methylbutanoate + NADP(+) = (2S)-2-acetolactate + NADPH + H(+). The catalysed reaction is (2R,3R)-2,3-dihydroxy-3-methylpentanoate + NADP(+) = (S)-2-ethyl-2-hydroxy-3-oxobutanoate + NADPH + H(+). It participates in amino-acid biosynthesis; L-isoleucine biosynthesis; L-isoleucine from 2-oxobutanoate: step 2/4. It functions in the pathway amino-acid biosynthesis; L-valine biosynthesis; L-valine from pyruvate: step 2/4. In terms of biological role, involved in the biosynthesis of branched-chain amino acids (BCAA). Catalyzes an alkyl-migration followed by a ketol-acid reduction of (S)-2-acetolactate (S2AL) to yield (R)-2,3-dihydroxy-isovalerate. In the isomerase reaction, S2AL is rearranged via a Mg-dependent methyl migration to produce 3-hydroxy-3-methyl-2-ketobutyrate (HMKB). In the reductase reaction, this 2-ketoacid undergoes a metal-dependent reduction by NADPH to yield (R)-2,3-dihydroxy-isovalerate. The sequence is that of Ketol-acid reductoisomerase (NADP(+)) from Staphylococcus haemolyticus (strain JCSC1435).